A 171-amino-acid chain; its full sequence is S-ribosylhomocysteine lyase (171 aa).

Fe cation-binding residues include His-54, His-58, and Cys-128.

It belongs to the LuxS family. In terms of assembly, homodimer. It depends on Fe cation as a cofactor.

The enzyme catalyses S-(5-deoxy-D-ribos-5-yl)-L-homocysteine = (S)-4,5-dihydroxypentane-2,3-dione + L-homocysteine. Functionally, involved in the synthesis of autoinducer 2 (AI-2) which is secreted by bacteria and is used to communicate both the cell density and the metabolic potential of the environment. The regulation of gene expression in response to changes in cell density is called quorum sensing. Catalyzes the transformation of S-ribosylhomocysteine (RHC) to homocysteine (HC) and 4,5-dihydroxy-2,3-pentadione (DPD). The polypeptide is S-ribosylhomocysteine lyase (Edwardsiella ictaluri (strain 93-146)).